Here is a 345-residue protein sequence, read N- to C-terminus: Phosphoribosylformylglycinamidine cyclo-ligase (345 aa).

It belongs to the AIR synthase family.

It is found in the cytoplasm. It catalyses the reaction 2-formamido-N(1)-(5-O-phospho-beta-D-ribosyl)acetamidine + ATP = 5-amino-1-(5-phospho-beta-D-ribosyl)imidazole + ADP + phosphate + H(+). It functions in the pathway purine metabolism; IMP biosynthesis via de novo pathway; 5-amino-1-(5-phospho-D-ribosyl)imidazole from N(2)-formyl-N(1)-(5-phospho-D-ribosyl)glycinamide: step 2/2. The sequence is that of Phosphoribosylformylglycinamidine cyclo-ligase from Shewanella woodyi (strain ATCC 51908 / MS32).